Consider the following 240-residue polypeptide: Proteasome subunit beta type-1 (240 aa).

M1 carries the post-translational modification N-acetylmethionine. Residues 1–27 constitute a propeptide that is removed on maturation; the sequence is MLSTAAYRDPDRELVMGPQGSAGPVQM. The O-linked (GlcNAc) serine glycan is linked to S57. Phosphoserine is present on residues S61 and S67. Phosphotyrosine is present on Y149. S161 is subject to Phosphoserine. K203 is modified (N6-acetyllysine). A glycan (O-linked (GlcNAc) serine) is linked at S208.

This sequence belongs to the peptidase T1B family. As to quaternary structure, the 26S proteasome consists of a 20S proteasome core and two 19S regulatory subunits. The 20S proteasome core is a barrel-shaped complex made of 28 subunits that are arranged in four stacked rings. The two outer rings are each formed by seven alpha subunits, and the two inner rings are formed by seven beta subunits. The proteolytic activity is exerted by three beta-subunits PSMB5, PSMB6 and PSMB7. Interacts with SERPINB2. Interacts with RFPL4A. Ubiquitous.

The protein resides in the cytoplasm. The protein localises to the nucleus. Its function is as follows. Non-catalytic component of the 20S core proteasome complex involved in the proteolytic degradation of most intracellular proteins. This complex plays numerous essential roles within the cell by associating with different regulatory particles. Associated with two 19S regulatory particles, forms the 26S proteasome and thus participates in the ATP-dependent degradation of ubiquitinated proteins. The 26S proteasome plays a key role in the maintenance of protein homeostasis by removing misfolded or damaged proteins that could impair cellular functions, and by removing proteins whose functions are no longer required. Associated with the PA200 or PA28, the 20S proteasome mediates ubiquitin-independent protein degradation. This type of proteolysis is required in several pathways including spermatogenesis (20S-PA200 complex) or generation of a subset of MHC class I-presented antigenic peptides (20S-PA28 complex). This is Proteasome subunit beta type-1 (Psmb1) from Rattus norvegicus (Rat).